Here is a 266-residue protein sequence, read N- to C-terminus: Phosphatidylglycerol--prolipoprotein diacylglyceryl transferase (266 aa).

Helical transmembrane passes span 19-39 (IWGPLDIRWYGLAYIAAFAFA), 61-81 (LMFWGFIGVILGGRIGYTLFY), 91-111 (LYLFYIHEGGMSFHGGLLGVI), 125-145 (FLQVGDFVAPLVPMGLFFGRI), 176-196 (PSQLYEALLEGLLLFAVILWF), 204-224 (GAVSGLFLLGYGVARFIVEFF), and 237-257 (GMSMGQWLTLPMIILGIILMV). Residue Arg144 coordinates a 1,2-diacyl-sn-glycero-3-phospho-(1'-sn-glycerol).

Belongs to the Lgt family.

Its subcellular location is the cell inner membrane. It catalyses the reaction L-cysteinyl-[prolipoprotein] + a 1,2-diacyl-sn-glycero-3-phospho-(1'-sn-glycerol) = an S-1,2-diacyl-sn-glyceryl-L-cysteinyl-[prolipoprotein] + sn-glycerol 1-phosphate + H(+). It functions in the pathway protein modification; lipoprotein biosynthesis (diacylglyceryl transfer). Catalyzes the transfer of the diacylglyceryl group from phosphatidylglycerol to the sulfhydryl group of the N-terminal cysteine of a prolipoprotein, the first step in the formation of mature lipoproteins. This is Phosphatidylglycerol--prolipoprotein diacylglyceryl transferase from Idiomarina loihiensis (strain ATCC BAA-735 / DSM 15497 / L2-TR).